A 218-amino-acid polypeptide reads, in one-letter code: Recombination protein RecR (218 aa).

The C4-type zinc finger occupies C56–C71. In terms of domain architecture, Toprim spans G79–P195.

It belongs to the RecR family.

Functionally, may play a role in DNA repair. It seems to be involved in an RecBC-independent recombinational process of DNA repair. It may act with RecF and RecO. The polypeptide is Recombination protein RecR (Corynebacterium glutamicum (strain R)).